The primary structure comprises 253 residues: MAGHSKWANIKRQKARVDAKKGKVFARLSRAIIVAARHGSADPNGNFQLRSAIDKAKAAGIPNENIDRAIAKGSGQLDAEGDQWEEIRYEGYGIGGVALLIEAMTDNRNRTAADLRAAFNKYGGNLGETGCVGWMFHQQGIISILGPVDEDQLLESLVETGADSYEFVEENAQAIAEVSTDVTVLETVTEALKAQDFQILDAEIRWIGEMSVAIADPDQAKSLIRLMDALEDLDDVQSVTANVEFMDNALAGL.

This sequence belongs to the TACO1 family.

It is found in the cytoplasm. The polypeptide is Probable transcriptional regulatory protein AM1_1847 (Acaryochloris marina (strain MBIC 11017)).